The chain runs to 353 residues: Abasic site processing protein HMCES (353 aa).

Cysteine 2 (nucleophile) is an active-site residue. Thiazolidine linkage to a ring-opened DNA abasic site is present on cysteine 2. Residue glutamate 127 is part of the active site. Glycyl lysine isopeptide (Lys-Gly) (interchain with G-Cter in SUMO2) cross-links involve residues lysine 148 and lysine 151. Position 160 is a phosphoserine (serine 160). Residues lysine 274 and lysine 275 each participate in a glycyl lysine isopeptide (Lys-Gly) (interchain with G-Cter in SUMO2) cross-link. The tract at residues 292–353 (TKSPKKEVPD…DEPVAKRPNS (62 aa)) is disordered. Phosphoserine is present on serine 294. Residues 295–307 (PKKEVPDSPKKDA) show a composition bias toward basic and acidic residues. Residue lysine 305 forms a Glycyl lysine isopeptide (Lys-Gly) (interchain with G-Cter in SUMO2) linkage. Serine 321 is modified (phosphoserine). The short motif at 332 to 338 (SLLDRWL) is the PIP-box element. A compositionally biased stretch (basic and acidic residues) spans 336-353 (RWLKQEKEDEPVAKRPNS). Glycyl lysine isopeptide (Lys-Gly) (interchain with G-Cter in SUMO2) cross-links involve residues lysine 339 and lysine 342.

Belongs to the SOS response-associated peptidase family. As to quaternary structure, interacts (via PIP-box motif) with PCNA. Post-translationally, ubiquitinated; the covalent HMCES DNA-protein cross-link is ubiquitinated, leading to its degradation by the proteasome.

It is found in the chromosome. Formation and reversal of DNA-protein cross-link depends on DNA context. Catalyzes formation of the thiazolidine linkage in presence of abasic sites in single-stranded DNA. Mediates the reversal of the thiazolidine cross-link in presence of double stranded DNA. Sensor of abasic sites in single-stranded DNA (ssDNA) required to preserve genome integrity by promoting error-free repair of abasic sites. Acts as an enzyme that recognizes and binds abasic sites in ssDNA at replication forks and chemically modifies the lesion by forming a covalent cross-link with DNA: forms a stable thiazolidine linkage between a ring-opened abasic site and the alpha-amino and sulfhydryl substituents of its N-terminal catalytic cysteine residue. Promotes error-free repair by protecting abasic sites from translesion synthesis (TLS) polymerases and endonucleases that are error-prone and would generate mutations and double-strand breaks. The HMCES DNA-protein cross-link is then either reversed or degraded. HMCES is able to catalyze the reversal of its thiazolidine cross-link and cycle between a cross-link and a non-cross-linked state depending on DNA context: mediates self-reversal of the thiazolidine cross-link in double stranded DNA, allowing APEX1 to initiate downstream repair of abasic sites. The HMCES DNA-protein cross-link can also be degraded by the SPRTN metalloprotease following unfolding by the BRIP1/FANCJ helicase. Has preference for ssDNA, but can also accommodate double-stranded DNA with 3' or 5' overhang (dsDNA), and dsDNA-ssDNA 3' junction. Plays a protective role during somatic hypermutation of immunoglobulin genes in B-cells: acts via its ability to form covalent cross-links with abasic sites, thereby limiting the accumulation of deletions in somatic hypermutation target regions. Also involved in class switch recombination (CSR) in B-cells independently of the formation of a DNA-protein cross-link: acts by binding and protecting ssDNA overhangs to promote DNA double-strand break repair through the microhomology-mediated alternative-end-joining (Alt-EJ) pathway. Acts as a protease: mediates autocatalytic processing of its N-terminal methionine in order to expose the catalytic cysteine. This is Abasic site processing protein HMCES from Rattus norvegicus (Rat).